The sequence spans 103 residues: Histone H4 (103 aa).

The tract at residues M1–I32 is disordered. Residues G10–Q25 are compositionally biased toward basic residues. The residue at position 16 (K16) is an N6-acetyl-N6-methyllysine; alternate. Residue K16 is modified to N6-methyllysine; alternate. A DNA-binding region spans residues K20–K24. At K94 the chain carries N6-glutaryllysine.

Belongs to the histone H4 family. In terms of assembly, the nucleosome is a histone octamer containing two molecules each of H2A, H2B, H3 and H4 assembled in one H3-H4 heterotetramer and two H2A-H2B heterodimers. The octamer wraps approximately 147 bp of DNA. Glutarylation at Lys-94 (H4K91glu) destabilizes nucleosomes by promoting dissociation of the H2A-H2B dimers from nucleosomes.

The protein resides in the nucleus. It is found in the chromosome. Core component of nucleosome. Nucleosomes wrap and compact DNA into chromatin, limiting DNA accessibility to the cellular machineries which require DNA as a template. Histones thereby play a central role in transcription regulation, DNA repair, DNA replication and chromosomal stability. DNA accessibility is regulated via a complex set of post-translational modifications of histones, also called histone code, and nucleosome remodeling. This is Histone H4 (HHF1) from Encephalitozoon cuniculi (strain GB-M1) (Microsporidian parasite).